Consider the following 597-residue polypeptide: Protein kinase C-like 3 (597 aa).

The 84-residue stretch at 12 to 95 (DIKLKTRFHG…AELNIHVFVG (84 aa)) folds into the PB1 domain. A Phorbol-ester/DAG-type zinc finger spans residues 127–177 (GHRFQGKRLNRRIQCFICHDYIWGIGRQGFRCVDCRLCVHKKCHRHVRTHC). The segment at 181 to 238 (PQGPNVPVAPSSGVGSLRGGRLDTSSSTTRSGGGIDNGAFHEHEIESPGSAKDMSRST) is disordered. One can recognise a Protein kinase domain in the interval 253–522 (FRLLTVIGRG…LNDMKEHDFF (270 aa)). Residues 259 to 267 (IGRGSYAKV) and Lys-282 each bind ATP. Asp-377 serves as the catalytic Proton acceptor. The AGC-kinase C-terminal domain occupies 524-595 (GFIDWEALEQ…VNPLQMSRED (72 aa)).

This sequence belongs to the protein kinase superfamily. AGC Ser/Thr protein kinase family. PKC subfamily. Interaction with par-3 required for the peripheral localization of par-6 and to form a par-3/par-6/pkc-3 complex, which is activated when cdc-42 interacts with par-6. Binds avidly to the phosphotyrosine interaction domain (PID) of a novel pkc-3 adapter protein num-1, which enables tethering and targeting of pkc-3 to the cell periphery. Requires Mg(2+) as cofactor.

It is found in the cytoplasm. The protein localises to the cytoskeleton. The catalysed reaction is L-seryl-[protein] + ATP = O-phospho-L-seryl-[protein] + ADP + H(+). It carries out the reaction L-threonyl-[protein] + ATP = O-phospho-L-threonyl-[protein] + ADP + H(+). In terms of biological role, required for the normal progression of embryogenesis and viability of the organism. Plays an indispensable role in establishing embryonic polarity and in recruiting and maintaining par-6 to the periphery, through interaction with par-3. Required for epithelial cell polarity in the distal spermatheca. Phosphorylates serine residues of num-1. Required for the expression of antimicrobial peptide nlp-29 in response in response to fungal infection or physical injury. This Caenorhabditis briggsae protein is Protein kinase C-like 3.